Reading from the N-terminus, the 544-residue chain is Chaperonin GroEL (544 aa).

Residues 29-32 (TLGP), 86-90 (DGTTT), glycine 413, 478-480 (NAA), and aspartate 494 each bind ATP.

The protein belongs to the chaperonin (HSP60) family. In terms of assembly, forms a cylinder of 14 subunits composed of two heptameric rings stacked back-to-back. Interacts with the co-chaperonin GroES.

It localises to the cytoplasm. It catalyses the reaction ATP + H2O + a folded polypeptide = ADP + phosphate + an unfolded polypeptide.. Its function is as follows. Together with its co-chaperonin GroES, plays an essential role in assisting protein folding. The GroEL-GroES system forms a nano-cage that allows encapsulation of the non-native substrate proteins and provides a physical environment optimized to promote and accelerate protein folding. The polypeptide is Chaperonin GroEL (Lysinibacillus sphaericus (strain C3-41)).